The sequence spans 452 residues: Cytochrome b-c1 complex subunit 2, mitochondrial (452 aa).

Residues 1–14 (MKLLSRAGSFSRFY) constitute a mitochondrion transit peptide. Lysine 65, lysine 198, and lysine 249 each carry N6-acetyllysine. Position 367 is a phosphoserine (serine 367).

This sequence belongs to the peptidase M16 family. UQCRC2/QCR2 subfamily. In terms of assembly, component of the ubiquinol-cytochrome c oxidoreductase (cytochrome b-c1 complex, complex III, CIII), a multisubunit enzyme composed of 11 subunits. The complex is composed of 3 respiratory subunits cytochrome b, cytochrome c1 and Rieske protein UQCRFS1, 2 core protein subunits UQCRC1/QCR1 and UQCRC2/QCR2, and 6 low-molecular weight protein subunits UQCRH/QCR6, UQCRB/QCR7, UQCRQ/QCR8, UQCR10/QCR9, UQCR11/QCR10 and subunit 9, the cleavage product of Rieske protein UQCRFS1. The complex exists as an obligatory dimer and forms supercomplexes (SCs) in the inner mitochondrial membrane with NADH-ubiquinone oxidoreductase (complex I, CI) and cytochrome c oxidase (complex IV, CIV), resulting in different assemblies (supercomplex SCI(1)III(2)IV(1) and megacomplex MCI(2)III(2)IV(2)). Interacts with RAB5IF. Interacts with STMP1. As to expression, expressed in the head region and flagellum of epididymal sperm.

It is found in the mitochondrion inner membrane. Component of the ubiquinol-cytochrome c oxidoreductase, a multisubunit transmembrane complex that is part of the mitochondrial electron transport chain which drives oxidative phosphorylation. The respiratory chain contains 3 multisubunit complexes succinate dehydrogenase (complex II, CII), ubiquinol-cytochrome c oxidoreductase (cytochrome b-c1 complex, complex III, CIII) and cytochrome c oxidase (complex IV, CIV), that cooperate to transfer electrons derived from NADH and succinate to molecular oxygen, creating an electrochemical gradient over the inner membrane that drives transmembrane transport and the ATP synthase. The cytochrome b-c1 complex catalyzes electron transfer from ubiquinol to cytochrome c, linking this redox reaction to translocation of protons across the mitochondrial inner membrane, with protons being carried across the membrane as hydrogens on the quinol. In the process called Q cycle, 2 protons are consumed from the matrix, 4 protons are released into the intermembrane space and 2 electrons are passed to cytochrome c. The 2 core subunits UQCRC1/QCR1 and UQCRC2/QCR2 are homologous to the 2 mitochondrial-processing peptidase (MPP) subunits beta-MPP and alpha-MPP respectively, and they seem to have preserved their MPP processing properties. May be involved in the in situ processing of UQCRFS1 into the mature Rieske protein and its mitochondrial targeting sequence (MTS)/subunit 9 when incorporated into complex III. This Rattus norvegicus (Rat) protein is Cytochrome b-c1 complex subunit 2, mitochondrial (Uqcrc2).